The following is a 682-amino-acid chain: Potassium-transporting ATPase ATP-binding subunit (682 aa).

The next 4 helical transmembrane spans lie at 34–54, 62–82, 219–239, and 254–274; these read PVMF…IAMA, ALFS…ANFA, IALT…TATL, and VLVA…LSAI. The active-site 4-aspartylphosphate intermediate is the D307. Residues D344, E348, 377–384, and K395 each bind ATP; that span reads FTAQSRMS. Mg(2+) is bound by residues D518 and D522. A run of 3 helical transmembrane segments spans residues 588–608, 616–636, and 656–676; these read FAII…LNIM, AILS…PLAL, and IYGL…DLLL.

This sequence belongs to the cation transport ATPase (P-type) (TC 3.A.3) family. Type IA subfamily. As to quaternary structure, the system is composed of three essential subunits: KdpA, KdpB and KdpC.

The protein resides in the cell inner membrane. The enzyme catalyses K(+)(out) + ATP + H2O = K(+)(in) + ADP + phosphate + H(+). In terms of biological role, part of the high-affinity ATP-driven potassium transport (or Kdp) system, which catalyzes the hydrolysis of ATP coupled with the electrogenic transport of potassium into the cytoplasm. This subunit is responsible for energy coupling to the transport system and for the release of the potassium ions to the cytoplasm. This Escherichia coli (strain K12 / MC4100 / BW2952) protein is Potassium-transporting ATPase ATP-binding subunit.